The following is a 480-amino-acid chain: Glutamyl-tRNA(Gln) amidotransferase subunit A (480 aa).

Catalysis depends on charge relay system residues Lys76 and Ser151. Catalysis depends on Ser175, which acts as the Acyl-ester intermediate.

It belongs to the amidase family. GatA subfamily. As to quaternary structure, heterotrimer of A, B and C subunits.

It carries out the reaction L-glutamyl-tRNA(Gln) + L-glutamine + ATP + H2O = L-glutaminyl-tRNA(Gln) + L-glutamate + ADP + phosphate + H(+). Its function is as follows. Allows the formation of correctly charged Gln-tRNA(Gln) through the transamidation of misacylated Glu-tRNA(Gln) in organisms which lack glutaminyl-tRNA synthetase. The reaction takes place in the presence of glutamine and ATP through an activated gamma-phospho-Glu-tRNA(Gln). This Exiguobacterium sp. (strain ATCC BAA-1283 / AT1b) protein is Glutamyl-tRNA(Gln) amidotransferase subunit A.